The following is an 81-amino-acid chain: Probable antitoxin MazE2 (81 aa).

In terms of assembly, forms a complex with cognate toxin MazF2.

In terms of biological role, antitoxin component of a type II toxin-antitoxin (TA) system. This is Probable antitoxin MazE2 (mazE2) from Mycobacterium tuberculosis (strain ATCC 25618 / H37Rv).